Consider the following 132-residue polypeptide: Small ribosomal subunit protein uS11 (132 aa).

It belongs to the universal ribosomal protein uS11 family. As to quaternary structure, part of the 30S ribosomal subunit. Interacts with proteins S7 and S18. Binds to IF-3.

In terms of biological role, located on the platform of the 30S subunit, it bridges several disparate RNA helices of the 16S rRNA. Forms part of the Shine-Dalgarno cleft in the 70S ribosome. The polypeptide is Small ribosomal subunit protein uS11 (Legionella pneumophila (strain Corby)).